A 1549-amino-acid polypeptide reads, in one-letter code: VPS10 homolog 1 (1549 aa).

A signal peptide spans 1-21 (MALFRALYIIWVFLLIPLSNA). The Lumenal segment spans residues 22-1369 (EEFTPKVTRT…AFREKYSINT (1348 aa)). BNR repeat units follow at residues 57–68 (EISFDAGENWKT), 101–112 (YVTDDQGKSWRP), 159–170 (IYTTNDGVSFSQ), 228–239 (ILSADGGETFKE), 393–404 (KVSVDNGLTWTN), and 465–476 (FISRDSGLTWRL). A glycan (N-linked (GlcNAc...) asparagine) is linked at N479. BNR repeat units lie at residues 511 to 522 (YYSLDQGKTWGE) and 740 to 751 (YISHDGGQTIKR). The N-linked (GlcNAc...) asparagine glycan is linked to N769. A BNR 9 repeat occupies 837 to 848 (YLTKDGGETFTE). An N-linked (GlcNAc...) asparagine glycan is attached at N986. BNR repeat units lie at residues 1040-1051 (KITFNDGSDWNF), 1119-1130 (FLTTDGGETWTE), and 1160-1171 (SYSTDFGKTWKD). Residues 1370–1390 (GAYALVFVTILLVIFFVAWFV) traverse the membrane as a helical segment. Residues 1391 to 1549 (YDRGIRRNGG…DLAAARSEDK (159 aa)) are Cytoplasmic-facing. Residues 1479–1549 (EPDGFHEDSN…DLAAARSEDK (71 aa)) are disordered. Over residues 1489 to 1501 (DLSSFRGQGSNSE) the composition is skewed to polar residues. Over residues 1535-1549 (ASHESDLAAARSEDK) the composition is skewed to basic and acidic residues.

It belongs to the VPS10-related sortilin family.

It localises to the golgi apparatus. The protein resides in the trans-Golgi network membrane. It is found in the endosome membrane. Its function is as follows. Functions as a sorting receptor in the Golgi compartment required for the intracellular sorting and delivery of soluble vacuolar proteins, like carboxypeptidase Y (CPY) and proteinase A. This chain is VPS10 homolog 1 (VTH1), found in Saccharomyces cerevisiae (strain ATCC 204508 / S288c) (Baker's yeast).